The chain runs to 906 residues: Patched domain-containing protein 3 (906 aa).

The interval 1–70 (MISSKVAPGE…LGQEAPPPRR (70 aa)) is disordered. N-linked (GlcNAc...) asparagine glycosylation is found at Asn148 and Asn235. A run of 11 helical transmembrane segments spans residues 338-358 (TVIP…VVSC), 370-390 (VAVF…GLML), 392-412 (LGVP…GVGV), 442-462 (VAVS…TGIT), 476-496 (GTTL…VMAL), 559-579 (FIVV…CFQV), 760-780 (VMIA…HPVC), 782-802 (LWVT…MAFW), 814-834 (LVIC…AFVS), 848-868 (LYLL…GVCV), and 883-903 (IMFL…PVFL). The 158-residue stretch at 339-496 (VIPLFHLAYI…ITCFGAVMAL (158 aa)) folds into the SSD domain.

This sequence belongs to the patched family. As to expression, expressed in germ cells of the testis (at protein level).

The protein resides in the cell projection. It is found in the cilium. Its subcellular location is the flagellum membrane. It localises to the endoplasmic reticulum membrane. Its function is as follows. May play a role in sperm development or sperm function. However, does not appear to have an essential role in spermatogenesis or male fertility. The protein is Patched domain-containing protein 3 (Ptchd3) of Mus musculus (Mouse).